Consider the following 195-residue polypeptide: CASP-like protein 1B2 (195 aa).

The Cytoplasmic portion of the chain corresponds to 1–25 (MDLEKGKKPSEQAAACRIMQVKDKL). Residues 26 to 46 (ITLQPVVRACVFLATAVAAVI) form a helical membrane-spanning segment. Over 47–78 (MGLNKQSYTTVVAIVGTRPVTQTFTAKFKDTP) the chain is Extracellular. Residues 79–99 (AFVFFVIANAIASGYNLMVLV) traverse the membrane as a helical segment. Residues 100 to 114 (TRRILQRRAQSLSVH) are Cytoplasmic-facing. Residues 115-135 (LLDMVILTLLATGSATAASMA) traverse the membrane as a helical segment. Residues 136 to 160 (QLGKNGNLHARWNPICDKFGSFCNH) lie on the Extracellular side of the membrane. Residues 161–181 (GGIALVSSFIGVALMLALNLL) form a helical membrane-spanning segment. Topologically, residues 182 to 195 (SAAANSPRSNVTGQ) are cytoplasmic.

Belongs to the Casparian strip membrane proteins (CASP) family. Homodimer and heterodimers.

It localises to the cell membrane. The sequence is that of CASP-like protein 1B2 from Oryza sativa subsp. indica (Rice).